A 306-amino-acid chain; its full sequence is N(1)-aminopropylagmatine ureohydrolase (306 aa).

His121, Asp145, His147, Asp149, Asp228, and Asp230 together coordinate Mn(2+).

The protein belongs to the arginase family. The cofactor is Mn(2+).

The enzyme catalyses N(1)-(3-aminopropyl)agmatine + H2O = urea + spermidine. It participates in amine and polyamine biosynthesis; spermidine biosynthesis. Functionally, ureohydrolase involved in the biosynthesis of spermidine via the carboxyaminopropylagmatine (CAPA) pathway. Catalyzes the conversion of aminopropylagmatine (APA) to spermidine and urea. Is highly specific to APA and incapable of releasing measurable urea from CAPA, agmatine, arginine, guanidine, guanidinobutyrate and guanidinopropionate. The chain is N(1)-aminopropylagmatine ureohydrolase from Synechocystis sp. (strain ATCC 27184 / PCC 6803 / Kazusa).